A 244-amino-acid polypeptide reads, in one-letter code: 14-3-3 protein homolog 1 (244 aa).

The protein belongs to the 14-3-3 family.

The chain is 14-3-3 protein homolog 1 from Echinococcus granulosus (Hydatid tapeworm).